Here is a 402-residue protein sequence, read N- to C-terminus: Deoxyguanosinetriphosphate triphosphohydrolase-like protein (402 aa).

One can recognise an HD domain in the interval arginine 69–aspartate 217.

The protein belongs to the dGTPase family. Type 2 subfamily.

The chain is Deoxyguanosinetriphosphate triphosphohydrolase-like protein from Bradyrhizobium diazoefficiens (strain JCM 10833 / BCRC 13528 / IAM 13628 / NBRC 14792 / USDA 110).